Here is a 404-residue protein sequence, read N- to C-terminus: Arginine biosynthesis bifunctional protein ArgJ (404 aa).

Residues threonine 156, lysine 182, threonine 193, glutamate 277, asparagine 399, and serine 404 each contribute to the substrate site. The active-site Nucleophile is threonine 193.

Belongs to the ArgJ family. Heterotetramer of two alpha and two beta chains.

It localises to the cytoplasm. It carries out the reaction N(2)-acetyl-L-ornithine + L-glutamate = N-acetyl-L-glutamate + L-ornithine. It catalyses the reaction L-glutamate + acetyl-CoA = N-acetyl-L-glutamate + CoA + H(+). Its pathway is amino-acid biosynthesis; L-arginine biosynthesis; L-ornithine and N-acetyl-L-glutamate from L-glutamate and N(2)-acetyl-L-ornithine (cyclic): step 1/1. It functions in the pathway amino-acid biosynthesis; L-arginine biosynthesis; N(2)-acetyl-L-ornithine from L-glutamate: step 1/4. Functionally, catalyzes two activities which are involved in the cyclic version of arginine biosynthesis: the synthesis of N-acetylglutamate from glutamate and acetyl-CoA as the acetyl donor, and of ornithine by transacetylation between N(2)-acetylornithine and glutamate. This is Arginine biosynthesis bifunctional protein ArgJ from Chlorobaculum tepidum (strain ATCC 49652 / DSM 12025 / NBRC 103806 / TLS) (Chlorobium tepidum).